The following is a 288-amino-acid chain: Methyltransferase ucsB (288 aa).

Residues Asp87 and 121 to 122 contribute to the S-adenosyl-L-methionine site; that span reads DA.

This sequence belongs to the class I-like SAM-binding methyltransferase superfamily.

It functions in the pathway mycotoxin biosynthesis. Its function is as follows. Methyltransferase; part of the gene cluster that mediates the biosynthesis of UCS1025A, a member of the pyrrolizidinone family that acts as a strong telomerase inhibitor and displays potent antibacterial and antitumor properties. These compounds share a hemiaminal-containing pyrrolizidinone core fused with a gamma-lactone, giving a furopyrrolizidine that is connected to a decalin fragment. The polyketide synthase module (PKS) of the PKS-NRPS ucsA is responsible for the synthesis of the polyketide backbone via the condensation of an acetyl-CoA starter unit with 6 malonyl-CoA units. The downstream nonribosomal peptide synthetase (NRPS) module then amidates the carboxyl end of the polyketide with a 2S,3S-methylproline derived from L-isoleucine by the 2-oxoglutarate-dependent dioxygenase ucsF which converts L-isoleucine to (4S,5S)-4-methylpyrroline-5-carboxylate that is further converted to 2S,3S-methylproline by the pyrroline-5-carboxylate reductase ucsG. Reductive release of the completed aminoacyl polyketide from the assembly line can form the 3-pyrrolin-2-one structure via an intramolecular Knoevenagel reaction. Because ucsA lacks a designated enoylreductase (ER) domain, the required activity is provided the enoyl reductase ucsL. This keto acyclic precursor is the substrate of the Diels-Alderase ucsH, that catalyzes the Diels-Alder cycloaddition. Oxidation of the 3S-methyl group to a carboxylate by the cytochrome P450 monooxygenase ucsK allows an oxa-Michael cyclization that might involve the reductase/dehydrogenase ucsI and which furnishes the furopyrrolizidine. The oxidase ucsJ likely plays a critical role in stereoselective reduction of the C5-C6 double bond to afford the required R-configured carboxylate group. Further enolization and oxidation at C5 by an unidentified enzyme affords the last intermediate that can undergo oxa-Michael cyclization to yield UCS1025A. The polypeptide is Methyltransferase ucsB (Acremonium sp).